The sequence spans 496 residues: Lysine--tRNA ligase (496 aa).

2 residues coordinate Mg(2+): E408 and E415.

It belongs to the class-II aminoacyl-tRNA synthetase family. In terms of assembly, homodimer. Mg(2+) is required as a cofactor.

It is found in the cytoplasm. It catalyses the reaction tRNA(Lys) + L-lysine + ATP = L-lysyl-tRNA(Lys) + AMP + diphosphate. In Legionella pneumophila (strain Corby), this protein is Lysine--tRNA ligase.